The sequence spans 234 residues: GTP-binding protein YPT52 (234 aa).

Residues 10–17 (GDSSVGKS), 66–70 (DTAGQ), and 111–114 (NKVG) contribute to the GTP site. Disordered regions lie at residues 131–151 (QETPSTETSPDSNEGGDEEQK) and 206–234 (NRQIGGGNNGQVDINLQRPSTNDPTSCCS). The segment covering 132–142 (ETPSTETSPDS) has biased composition (polar residues). Residues Ser139 and Ser142 each carry the phosphoserine modification. Residue Lys151 forms a Glycyl lysine isopeptide (Lys-Gly) (interchain with G-Cter in ubiquitin) linkage. Positions 217–234 (VDINLQRPSTNDPTSCCS) are enriched in polar residues. S-geranylgeranyl cysteine attachment occurs at residues Cys232 and Cys233.

It belongs to the small GTPase superfamily. Rab family. Interacts with ROY1, YIF1, YIP3, YIP4 and YIP5.

It localises to the cell membrane. Its subcellular location is the endoplasmic reticulum. Its function is as follows. Required for transport in the endocytic pathway and for correct sorting of the vacuolar hydrolases suggesting a possible intersection of the endocytic with the vacuolar sorting pathway. May be involved in recruiting the MON1-CCZ1 complex to membranes enriched in phosphatidylinositol 3-phosphate (PtdIns[3]P) or other charged lipids, leading to recruitment of YPT7. This chain is GTP-binding protein YPT52 (YPT52), found in Saccharomyces cerevisiae (strain ATCC 204508 / S288c) (Baker's yeast).